A 187-amino-acid chain; its full sequence is Major allergen Equ c 1 (187 aa).

The segment at residues 1 to 15 is a signal peptide (or 16, or 21); that stretch reads MKLLLLCLGLILVCA. Residues Asn-53 and Asn-68 are each glycosylated (N-linked (GlcNAc...) asparagine). Cys-83 and Cys-176 are oxidised to a cystine.

The protein belongs to the calycin superfamily. Lipocalin family. In terms of assembly, homodimer. In terms of processing, several N-terminal ends may be due to cleavage by signal peptidase at different sites or may be generated by proteolytic processing of the secreted protein. Analysis of the sugar composition shows the presence of GalNAc, Gal, NeuAc, GlcNAc, and Man. May be also O-glycosylated. As to expression, expressed in liver and in sublingual and submaxillary salivary glands. Highly concentrated in secretory fluid such as saliva and urine as well as in hair dandruff extract.

The protein resides in the secreted. The sequence is that of Major allergen Equ c 1 from Equus caballus (Horse).